Here is a 203-residue protein sequence, read N- to C-terminus: Recombination protein RecR (203 aa).

Residues 58 to 73 form a C4-type zinc finger; the sequence is CDYCGNLDVVSICNIC. Positions 81 to 177 constitute a Toprim domain; that stretch reads SIIAIVESVA…KISKLASGIP (97 aa).

This sequence belongs to the RecR family.

Functionally, may play a role in DNA repair. It seems to be involved in an RecBC-independent recombinational process of DNA repair. It may act with RecF and RecO. This Orientia tsutsugamushi (strain Boryong) (Rickettsia tsutsugamushi) protein is Recombination protein RecR.